A 629-amino-acid polypeptide reads, in one-letter code: tRNA uridine 5-carboxymethylaminomethyl modification enzyme MnmG (629 aa).

FAD is bound by residues 13–18 (GGGHAG), Val-125, and Ser-180. 273 to 287 (GPRYCPSIEDKIHRF) lines the NAD(+) pocket. Residue Gln-370 coordinates FAD.

This sequence belongs to the MnmG family. In terms of assembly, homodimer. Heterotetramer of two MnmE and two MnmG subunits. The cofactor is FAD.

It localises to the cytoplasm. NAD-binding protein involved in the addition of a carboxymethylaminomethyl (cmnm) group at the wobble position (U34) of certain tRNAs, forming tRNA-cmnm(5)s(2)U34. This chain is tRNA uridine 5-carboxymethylaminomethyl modification enzyme MnmG, found in Shewanella oneidensis (strain ATCC 700550 / JCM 31522 / CIP 106686 / LMG 19005 / NCIMB 14063 / MR-1).